The primary structure comprises 181 residues: Large ribosomal subunit protein uL5 (181 aa).

Belongs to the universal ribosomal protein uL5 family. In terms of assembly, part of the 50S ribosomal subunit; part of the 5S rRNA/L5/L18/L25 subcomplex. Contacts the 5S rRNA and the P site tRNA. Forms a bridge to the 30S subunit in the 70S ribosome.

Its function is as follows. This is one of the proteins that bind and probably mediate the attachment of the 5S RNA into the large ribosomal subunit, where it forms part of the central protuberance. In the 70S ribosome it contacts protein S13 of the 30S subunit (bridge B1b), connecting the 2 subunits; this bridge is implicated in subunit movement. Contacts the P site tRNA; the 5S rRNA and some of its associated proteins might help stabilize positioning of ribosome-bound tRNAs. This is Large ribosomal subunit protein uL5 from Campylobacter jejuni subsp. doylei (strain ATCC BAA-1458 / RM4099 / 269.97).